A 208-amino-acid chain; its full sequence is Superoxide dismutase [Mn] (208 aa).

His-27, His-81, Asp-168, and His-172 together coordinate Mn(2+).

The protein belongs to the iron/manganese superoxide dismutase family. Homodimer. Mn(2+) is required as a cofactor.

The enzyme catalyses 2 superoxide + 2 H(+) = H2O2 + O2. Functionally, destroys superoxide anion radicals which are normally produced within the cells and which are toxic to biological systems. The chain is Superoxide dismutase [Mn] (sodA) from Buchnera aphidicola subsp. Baizongia pistaciae (strain Bp).